The sequence spans 368 residues: Probable dual-specificity RNA methyltransferase RlmN (368 aa).

Catalysis depends on Glu109, which acts as the Proton acceptor. Residues 115–355 enclose the Radical SAM core domain; the sequence is YPDRVTMCIS…VTVRDTRGQE (241 aa). Cys122 and Cys360 are oxidised to a cystine. Positions 129, 133, and 136 each coordinate [4Fe-4S] cluster. S-adenosyl-L-methionine contacts are provided by residues 184-185, Ser218, 241-243, and Asn317; these read GE and SLH. The S-methylcysteine intermediate role is filled by Cys360.

This sequence belongs to the radical SAM superfamily. RlmN family. [4Fe-4S] cluster is required as a cofactor.

The protein localises to the cytoplasm. The enzyme catalyses adenosine(2503) in 23S rRNA + 2 reduced [2Fe-2S]-[ferredoxin] + 2 S-adenosyl-L-methionine = 2-methyladenosine(2503) in 23S rRNA + 5'-deoxyadenosine + L-methionine + 2 oxidized [2Fe-2S]-[ferredoxin] + S-adenosyl-L-homocysteine. It catalyses the reaction adenosine(37) in tRNA + 2 reduced [2Fe-2S]-[ferredoxin] + 2 S-adenosyl-L-methionine = 2-methyladenosine(37) in tRNA + 5'-deoxyadenosine + L-methionine + 2 oxidized [2Fe-2S]-[ferredoxin] + S-adenosyl-L-homocysteine. Its function is as follows. Specifically methylates position 2 of adenine 2503 in 23S rRNA and position 2 of adenine 37 in tRNAs. The chain is Probable dual-specificity RNA methyltransferase RlmN from Streptomyces griseus subsp. griseus (strain JCM 4626 / CBS 651.72 / NBRC 13350 / KCC S-0626 / ISP 5235).